The following is a 307-amino-acid chain: Chlorophyll a-b binding protein 1, chloroplastic (307 aa).

A chloroplast-targeting transit peptide spans 1 to 44; that stretch reads MAPYSVVASVLAAAPPQQSGSVRQLPSTINRAITQRSQSRHVAS. A disordered region spans residues 34 to 54; that stretch reads TQRSQSRHVASASSASSPTTM. Chlorophyll a contacts are provided by Thr52, Glu63, Ile64, Gly65, Tyr68, Leu81, Pro86, Arg89, Gly90, Phe91, and Asp92. Leu96 contacts loroxanthin. The chain crosses the membrane as a helical span at residues 111–143; that stretch reads NYDESRLRWLLEGELYNGRLAMLAVVGVLTVEA. Chlorophyll a contacts are provided by Leu120, Glu124, Asn127, Met132, and Lys146. Loroxanthin is bound at residue Trp149. Positions 151, 163, 171, 178, 181, 190, 198, and 200 each coordinate chlorophyll a. Residues 161–186 form a helical membrane-spanning segment; sequence TPYVVAVVGGHLAFALLEKKRLENFR. Residues Asp200 and Leu202 each contribute to the all-trans-violaxanthin site. The chlorophyll a site is built by Leu204, Asn208, Tyr214, Asn215, Ala218, Asn222, and Arg224. Residues 213–238 form a helical membrane-spanning segment; sequence DYNRQAEVRNCRLAMLTFLGFSVQAW. A loroxanthin-binding site is contributed by Phe230. Phe233 lines the all-trans-violaxanthin pocket. Gln236 lines the chlorophyll a pocket. An all-trans-violaxanthin-binding site is contributed by Pro244. Chlorophyll a contacts are provided by Asn247, His251, Pro255, Phe256, Ala258, Asn259, Ile260, and Phe274. A helical membrane pass occupies residues 265 to 289; that stretch reads DRGTNVVAIFSAFAAVMHIAELARE.

It belongs to the light-harvesting chlorophyll a/b-binding (LHC) protein family. As to quaternary structure, homooligomer. Component of a light-harvesting complex (LHC) consisting of 11 chlorophyll a-b binding proteins. It depends on Binds 11 chlorophylls (Chl-a and Chl-b) and the 2 carotenoids violaxanthin and loroxanthin. as a cofactor.

Its subcellular location is the plastid. The protein localises to the chloroplast thylakoid membrane. In terms of biological role, component of a light-harvesting complex (LHC). The LHC functions as a light receptor, it captures and delivers excitation energy to photosystems with which it is closely associated. Functions in a far-red LHC by absorbing far-red light and promoting photosystem II (PSII) excitation, likely with entropy-driven uphill excitation energy transfer. Exhibits a typical absorption band at 671 nm (Qy band), as well as a large far-red absorption band at 706.5 together with fluorescence emission at around 713 nm (F713). In Prasiola crispa (Green alga), this protein is Chlorophyll a-b binding protein 1, chloroplastic.